A 102-amino-acid chain; its full sequence is Circadian clock oscillator protein KaiB (102 aa).

Belongs to the KaiB family. In terms of assembly, undergoes a major conformational rearrangment; in the free state forms homotetramers with 2 dimers. When bound to the CI domain of KaiC switches to a monomeric thioredoxin-fold (KaiB(fs)). Monomers, homodimers and homotetramers are detected in solution; at low concentrations only monomers are seen. In vitro forms KaiC(6):KaiB(1) and KaiC(6):KaiB(6) complexes. Only associates with 'Ser-431'-phosphorylated KaiC (and not with doubly phosphorylated KaiC). Complex formation between KaiB and KaiC is regulated by the phosphorylation state of KaiC and by an ATP hydrolysis-driven conformation change in the CI ring of KaiC; complex formation is slow. Slow complex formation is crucial for the timing of the circadian period. In low resolution cryo-EM forms a KaiC(6):KaiB(6) complex. The KaiABC complex composition changes during the circadian cycle to control KaiC phosphorylation. Complexes KaiC(6), KaiA(2-4):KaiC(6), KaiB(6):KaiC(6) and KaiC(6):KaiB(6):KaiA(12) are among the most important forms, many form cooperatively. The KaiB:KaiC complex is more prevalent at 16 hours (in the dark) than at 4 hours (in the light) in the circadian cycle. The KaiA:KaiB complex is only found at 20-24 hours in the circadian cycle (subjective night). Binds to the CI domain of KaiC; SasA and KaiB compete to bind to the CI domain.

Its subcellular location is the cytoplasm. It is found in the cell membrane. Functionally, key component of the KaiABC oscillator complex, which constitutes the main circadian regulator in cyanobacteria. Complex composition changes during the circadian cycle to control KaiC phosphorylation. KaiA stimulates KaiC autophosphorylation, while KaiB sequesters KaiA, leading to KaiC autodephosphorylation. KaiA binding to the KaiC CII domain yields KaiA(2-4):KaiC(6) complexes which stimulate KaiC autophosphorylation. Phospho-Ser-431 KaiC accumulation triggers binding of KaiB to form the KaiB(6):KaiC(6) complex, leading to changes in the output regulators CikA and SasA. KaiB switches to a thioredoxin-like fold (KaiB(fs)) in complex with KaiC. KaiB(6):KaiC(6) formation exposes a site for KaiA binding that sequesters KaiA from the CII domain, making the KaiC(6):KaiB(6):KaiA(12) complex that results in KaiC autodephosphorylation. Complete dephosphorylation of KaiC leads to dissociation of KaiA(2):KaiB(1), completing 1 cycle of the Kai oscillator. Its function is as follows. Circadian oscillations can be generated in vitro by incubating KaiA, KaiB and KaiC with 1 mM ATP. The cycle is self-sustainable for at least 3 cycles and resistant to temperature changes. A very robust clock is reconstituted with KaiA, KaiB, KaiC, SasA, CikA and RpaA; output is measured by transcription from an appropriate reporter. In terms of biological role, a metamorphic protein which reversibly switches between an inactive tetrameric fold and a rare, thioredoxin-like monomeric fold (KaiB(fs)). KaiB(fs) binds phospho-KaiC, KaiA and CikA. KaiA and CikA compete for binding to KaiB(fs), and KaiB(fs) and SasA compete for binding to KaiC, thus the clock oscillator and output signal pathway are tightly coupled. This chain is Circadian clock oscillator protein KaiB, found in Synechococcus elongatus (strain ATCC 33912 / PCC 7942 / FACHB-805) (Anacystis nidulans R2).